Consider the following 1137-residue polypeptide: UDP-N-acetylglucosamine transferase subunit ALG13 (1137 aa).

A glycosyltransferase activity region spans residues 1-125; that stretch reads MKCVFVTVGT…LHKEGHLFYC (125 aa). The segment at 126–400 is deubiquitinase activity; that stretch reads TCRVLTCPGQ…GSKKNRNNAV (275 aa). The 122-residue stretch at 231–352 folds into the OTU domain; that stretch reads LFRKLTAKDA…SGHYDSVYSK (122 aa). D239 (for deubiquitinase activity) is an active-site residue. C242 serves as the catalytic Nucleophile; for deubiquitinase activity. H345 (for deubiquitinase activity) is an active-site residue. The region spanning 492 to 552 is the Tudor domain; that stretch reads QYYLGDKCQV…KPVTQVMSVP (61 aa). Disordered regions lie at residues 641–660 and 911–974; these read HFHPQHPSPRQGRGYGMPRN and IPHA…SGSD. Pro residues-rich tracts occupy residues 918 to 946 and 956 to 967; these read LPPPPPPPPPPPPPPPPPPPPPPPPPPPA and QPPPPLPPPPYS.

Belongs to the glycosyltransferase 28 family. As to quaternary structure, forms with ALG14 the active heterodimeric UDP-N-acetylglucosamine transferase complex. In terms of assembly, not able to interact with ALG14 to form an active UDP-N-acetylglucosamine transferase complex.

The protein resides in the endoplasmic reticulum membrane. It catalyses the reaction an N-acetyl-alpha-D-glucosaminyl-diphospho-di-trans,poly-cis-dolichol + UDP-N-acetyl-alpha-D-glucosamine = an N,N'-diacetylchitobiosyl-diphospho-di-trans,poly-cis-dolichol + UDP + H(+). It participates in protein modification; protein glycosylation. Functionally, catalytic subunit of the UDP-N-acetylglucosamine transferase complex that operates in the biosynthetic pathway of dolichol-linked oligosaccharides, the glycan precursors employed in protein asparagine (N)-glycosylation. The assembly of dolichol-linked oligosaccharides begins on the cytosolic side of the endoplasmic reticulum membrane and finishes in its lumen. The sequential addition of sugars to dolichol pyrophosphate produces dolichol-linked oligosaccharides containing fourteen sugars, including two GlcNAcs, nine mannoses and three glucoses. Once assembled, the oligosaccharide is transferred from the lipid to nascent proteins by oligosaccharyltransferases. On the cytoplasmic face of the endoplasmic reticulum, the dimeric ALG13/ALG14 complex catalyzes the second step of dolichol pyrophosphate biosynthesis, transferring a beta1,4-linked N-acetylglucosamine (GlcNAc) from UDP-GlcNAc to GlcNAc-pyrophosphatedolichol (Gn-PDol) to produce N,N'-diacetylchitobiosyl diphosphodolichol. N,N'-diacetylchitobiosyl diphosphodolichol is a substrate for ALG1, the following enzyme in the biosynthetic pathway. No glycosyltransferase or deubiquitinase activity is detected for this potential multifunctional enzyme. This Homo sapiens (Human) protein is UDP-N-acetylglucosamine transferase subunit ALG13.